A 793-amino-acid chain; its full sequence is Endonuclease MutS2 (793 aa).

329–336 lines the ATP pocket; sequence GPNTGGKT. The interval 611-639 is disordered; it reads LARARQAVEPTEEEQRARRRGEVPRGLKP. Residues 623 to 639 show a composition bias toward basic and acidic residues; that stretch reads EEQRARRRGEVPRGLKP. The Smr domain maps to 717–792; the sequence is VDLRGLMVEE…GDGVTVAKLR (76 aa).

It belongs to the DNA mismatch repair MutS family. MutS2 subfamily. In terms of assembly, homodimer. Binds to stalled ribosomes, contacting rRNA.

Functionally, endonuclease that is involved in the suppression of homologous recombination and thus may have a key role in the control of bacterial genetic diversity. In terms of biological role, acts as a ribosome collision sensor, splitting the ribosome into its 2 subunits. Detects stalled/collided 70S ribosomes which it binds and splits by an ATP-hydrolysis driven conformational change. Acts upstream of the ribosome quality control system (RQC), a ribosome-associated complex that mediates the extraction of incompletely synthesized nascent chains from stalled ribosomes and their subsequent degradation. Probably generates substrates for RQC. The polypeptide is Endonuclease MutS2 (Symbiobacterium thermophilum (strain DSM 24528 / JCM 14929 / IAM 14863 / T)).